The chain runs to 905 residues: Cadherin-2B (905 aa).

An N-terminal signal peptide occupies residues 1 to 28 (MCRKQPFLLPTLLGILAALMLQQGPVEA). Positions 29-160 (FGGSRLCKTG…NSNGLQRQKR (132 aa)) are excised as a propeptide. Cadherin domains are found at residues 161-268 (DWVI…RPEF), 269-383 (LHQI…PPEF), 384-498 (TAMT…NPYF), 499-604 (TPNP…DNAP), and 605-713 (YVYP…TTAP). Topologically, residues 161–723 (DWVIPPINVP…IIGTGLGTGA (563 aa)) are extracellular. Glu-171 contributes to the Ca(2+) binding site. Asn-191 carries N-linked (GlcNAc...) asparagine glycosylation. Ca(2+)-binding residues include Asp-227, Glu-229, Asp-260, Met-261, Asn-262, Asp-263, and Asn-264. Asn-274 is a glycosylation site (N-linked (GlcNAc...) asparagine). Asp-294, Asp-296, and Asn-302 together coordinate Ca(2+). The N-linked (GlcNAc...) asparagine glycan is linked to Asn-326. Ca(2+) is bound at residue Asp-354. N-linked (GlcNAc...) asparagine glycans are attached at residues Asn-403, Asn-573, Asn-623, Asn-651, and Asn-692. Residues 724–745 (IIAILLCIIILLTLVLMFVVWM) form a helical membrane-spanning segment. Topologically, residues 746–905 (KRRDKERQAK…LADMYGGSDD (160 aa)) are cytoplasmic. Disordered stretches follow at residues 774 to 800 (EEGG…PDTI) and 862 to 883 (SGST…EQDY). The segment covering 775 to 784 (EGGGEEDQDY) has biased composition (acidic residues). Residues 862 to 879 (SGSTAGSLSSLNSSSSGG) are compositionally biased toward low complexity.

As to quaternary structure, homodimer (via extracellular region). Can also form heterodimers with other cadherins (via extracellular region). Dimerization occurs in trans, i.e. with a cadherin chain from another cell.

The protein localises to the cell membrane. It is found in the sarcolemma. The protein resides in the cell junction. Its subcellular location is the cell surface. It localises to the desmosome. The protein localises to the adherens junction. Calcium-dependent cell adhesion protein; preferentially mediates homotypic cell-cell adhesion. Cadherins may thus contribute to the sorting of heterogeneous cell types, and thereby play an important role during embryonic development. Required for proper neurite branching. Required for pre- and postsynaptic organization. This is Cadherin-2B (cdh2-b) from Xenopus laevis (African clawed frog).